We begin with the raw amino-acid sequence, 555 residues long: DNA-directed primase/polymerase protein (555 aa).

The stretch at 1–22 (MKRKWEATLKQIEERASHYERK) forms a coiled coil. Residues Arg-76, 114–116 (DLE), and 165–169 (KFSRH) contribute to the substrate site. The Mn(2+) site is built by Asp-114 and Glu-116. Residues 210-230 (ETTGHEFTHFSETPSEQGTCF) are disordered. The span at 219-230 (FSETPSEQGTCF) shows a compositional bias: polar residues. The residue at position 255 (Ser-255) is a Phosphoserine. Residues 288–291 (RNFR) and Lys-297 contribute to the substrate site. Residues Cys-418, His-425, Cys-445, and Cys-450 each contribute to the Zn(2+) site. The Zinc knuckle motif signature appears at 418 to 451 (CENIGRAHRSNNIMILVDLKNEVWYQKCHDPVCK). The tract at residues 480–503 (TDTTADTETKSPHGPSSSVLSKGA) is disordered. Positions 480-555 (TDTTADTETK…DELLIEVLQE (76 aa)) are interaction with RPA1. 2 consecutive short sequence motifs (RPA1-binding motif) follow at residues 509 to 523 (WDNG…EATE) and 543 to 551 (EIPDELLIE).

The protein belongs to the eukaryotic-type primase small subunit family. Interacts with RPA1; leading to recruitment to chromatin and stimulate DNA primase activity. Interacts with SSBP1. Interacts with POLDIP2; leading to enhance DNA polymerase activity. Mn(2+) is required as a cofactor.

The protein resides in the nucleus. Its subcellular location is the mitochondrion matrix. The protein localises to the chromosome. It carries out the reaction ssDNA + n NTP = ssDNA/pppN(pN)n-1 hybrid + (n-1) diphosphate.. It catalyses the reaction DNA(n) + a 2'-deoxyribonucleoside 5'-triphosphate = DNA(n+1) + diphosphate. Functionally, DNA primase and DNA polymerase required to tolerate replication-stalling lesions by bypassing them. Required to facilitate mitochondrial and nuclear replication fork progression by initiating de novo DNA synthesis using dNTPs and acting as an error-prone DNA polymerase able to bypass certain DNA lesions. Shows a high capacity to tolerate DNA damage lesions such as 8oxoG and abasic sites in DNA. Provides different translesion synthesis alternatives when DNA replication is stalled: able to synthesize DNA primers downstream of lesions, such as ultraviolet (UV) lesions, R-loops and G-quadruplexes, to allow DNA replication to continue. Can also realign primers ahead of 'unreadable lesions' such as abasic sites and 6-4 photoproduct (6-4 pyrimidine-pyrimidinone), thereby skipping the lesion. Repriming avoids fork degradation while leading to accumulation of internal ssDNA gaps behind the forks. Also able to incorporate nucleotides opposite DNA lesions such as 8oxoG, like a regular translesion synthesis DNA polymerase. Also required for reinitiating stalled forks after UV damage during nuclear DNA replication. Required for mitochondrial DNA (mtDNA) synthesis and replication, by reinitiating synthesis after UV damage or in the presence of chain-terminating nucleotides. Prevents APOBEC family-mediated DNA mutagenesis by repriming downstream of abasic site to prohibit error-prone translesion synthesis. Has non-overlapping function with POLH. In addition to its role in DNA damage response, also required to maintain efficient nuclear and mitochondrial DNA replication in unperturbed cells. The chain is DNA-directed primase/polymerase protein from Bos taurus (Bovine).